Here is a 213-residue protein sequence, read N- to C-terminus: Orotate phosphoribosyltransferase (213 aa).

Lys26 contacts 5-phospho-alpha-D-ribose 1-diphosphate. Orotate is bound at residue 34–35 (FF). 5-phospho-alpha-D-ribose 1-diphosphate is bound by residues 72–73 (YK), Arg99, Lys100, Lys103, His105, and 124–132 (DDVITAGTA). The orotate site is built by Thr128 and Arg156.

Belongs to the purine/pyrimidine phosphoribosyltransferase family. PyrE subfamily. Homodimer. Requires Mg(2+) as cofactor.

It catalyses the reaction orotidine 5'-phosphate + diphosphate = orotate + 5-phospho-alpha-D-ribose 1-diphosphate. It participates in pyrimidine metabolism; UMP biosynthesis via de novo pathway; UMP from orotate: step 1/2. Its function is as follows. Catalyzes the transfer of a ribosyl phosphate group from 5-phosphoribose 1-diphosphate to orotate, leading to the formation of orotidine monophosphate (OMP). The protein is Orotate phosphoribosyltransferase of Pseudomonas aeruginosa (strain UCBPP-PA14).